The chain runs to 252 residues: Imidazole glycerol phosphate synthase subunit HisF (252 aa).

Active-site residues include aspartate 11 and aspartate 130.

This sequence belongs to the HisA/HisF family. In terms of assembly, heterodimer of HisH and HisF.

It is found in the cytoplasm. The catalysed reaction is 5-[(5-phospho-1-deoxy-D-ribulos-1-ylimino)methylamino]-1-(5-phospho-beta-D-ribosyl)imidazole-4-carboxamide + L-glutamine = D-erythro-1-(imidazol-4-yl)glycerol 3-phosphate + 5-amino-1-(5-phospho-beta-D-ribosyl)imidazole-4-carboxamide + L-glutamate + H(+). Its pathway is amino-acid biosynthesis; L-histidine biosynthesis; L-histidine from 5-phospho-alpha-D-ribose 1-diphosphate: step 5/9. IGPS catalyzes the conversion of PRFAR and glutamine to IGP, AICAR and glutamate. The HisF subunit catalyzes the cyclization activity that produces IGP and AICAR from PRFAR using the ammonia provided by the HisH subunit. The polypeptide is Imidazole glycerol phosphate synthase subunit HisF (Staphylococcus saprophyticus subsp. saprophyticus (strain ATCC 15305 / DSM 20229 / NCIMB 8711 / NCTC 7292 / S-41)).